We begin with the raw amino-acid sequence, 342 residues long: Heat-inducible transcription repressor HrcA (342 aa).

The protein belongs to the HrcA family.

Its function is as follows. Negative regulator of class I heat shock genes (grpE-dnaK-dnaJ and groELS operons). Prevents heat-shock induction of these operons. In Dechloromonas aromatica (strain RCB), this protein is Heat-inducible transcription repressor HrcA.